The primary structure comprises 95 residues: Trypomastigote decay-accelerating factor (95 aa).

The protein belongs to the receptors of complement activation (RCA) family.

Interferes with the efficient assembly of the host C3 convertase. Could protect parasites from complement-mediated lysis by sera from a number of different species. The protein is Trypomastigote decay-accelerating factor of Trypanosoma cruzi.